The sequence spans 140 residues: MPPKAAEKKPSTGGKAPAGKAPAEKKEAGKKTAAAASGDKKKRGKTRKETYSSYIYKVLKQVHPDTGISTRAMSILNSFVNDIFERVATEASKLAAYNKKSTISSREIQTSVRLILPGELAKHAVSEGTKAVTKYSSSAK.

A compositionally biased stretch (basic and acidic residues) spans 1-10 (MPPKAAEKKP). The disordered stretch occupies residues 1 to 48 (MPPKAAEKKPSTGGKAPAGKAPAEKKEAGKKTAAAASGDKKKRGKTRK). N6-acetyllysine; alternate occurs at positions 8 and 9. Glycyl lysine isopeptide (Lys-Gly) (interchain with G-Cter in SUMO); alternate cross-links involve residues Lys-8 and Lys-9. Low complexity predominate over residues 11-21 (STGGKAPAGKA). Lys-15 bears the N6-acetyllysine mark. Lys-25 bears the N6-acetyllysine; alternate mark. Lys-25 is covalently cross-linked (Glycyl lysine isopeptide (Lys-Gly) (interchain with G-Cter in SUMO); alternate). A Glycyl lysine isopeptide (Lys-Gly) (interchain with G-Cter in SUMO) cross-link involves residue Lys-26. A Glycyl lysine isopeptide (Lys-Gly) (interchain with G-Cter in ubiquitin) cross-link involves residue Lys-134.

This sequence belongs to the histone H2B family. The nucleosome is a histone octamer containing two molecules each of H2A, H2B, H3 and H4 assembled in one H3-H4 heterotetramer and two H2A-H2B heterodimers. The octamer wraps approximately 147 bp of DNA. Monoubiquitinated by the ubc2-bre1 complex to form H2BK123ub1. H2BK123ub1 gives a specific tag for epigenetic transcriptional activation and is also prerequisite for H3K4me and H3K79me formation. H2BK123ub1 also modulates the formation of double-strand breaks during meiosis and is a prerequisite for DNA-damage checkpoint activation. In terms of processing, acetylated by gcn5 to form H2BK11ac and H2BK16ac. H2BK16ac can also be formed by esa1. Acetylation of N-terminal lysines and particularly formation of H2BK11acK16ac has a positive effect on transcription. Post-translationally, sumoylation to form H2BK6su or H2BK7su, and probably also H2BK16su or H2BK17su, occurs preferentially near the telomeres and represses gene transcription.

The protein resides in the nucleus. It localises to the chromosome. Functionally, core component of nucleosome. Nucleosomes wrap and compact DNA into chromatin, limiting DNA accessibility to the cellular machineries which require DNA as a template. Histones thereby play a central role in transcription regulation, DNA repair, DNA replication and chromosomal stability. DNA accessibility is regulated via a complex set of post-translational modifications of histones, also called histone code, and nucleosome remodeling. This chain is Histone H2B (htb1), found in Aspergillus clavatus (strain ATCC 1007 / CBS 513.65 / DSM 816 / NCTC 3887 / NRRL 1 / QM 1276 / 107).